Reading from the N-terminus, the 380-residue chain is Tubulin alpha chain (380 aa).

GTP contacts are provided by Glu46, Ser115, Gly119, Thr120, Thr154, Asn181, and Asn202. Glu46 contributes to the Mg(2+) binding site. Glu228 is a catalytic residue.

The protein belongs to the tubulin family. In terms of assembly, dimer of alpha and beta chains. A typical microtubule is a hollow water-filled tube with an outer diameter of 25 nm and an inner diameter of 15 nM. Alpha-beta heterodimers associate head-to-tail to form protofilaments running lengthwise along the microtubule wall with the beta-tubulin subunit facing the microtubule plus end conferring a structural polarity. Microtubules usually have 13 protofilaments but different protofilament numbers can be found in some organisms and specialized cells. Mg(2+) serves as cofactor.

The protein localises to the cytoplasm. It localises to the cytoskeleton. It carries out the reaction GTP + H2O = GDP + phosphate + H(+). Functionally, tubulin is the major constituent of microtubules, a cylinder consisting of laterally associated linear protofilaments composed of alpha- and beta-tubulin heterodimers. Microtubules grow by the addition of GTP-tubulin dimers to the microtubule end, where a stabilizing cap forms. Below the cap, tubulin dimers are in GDP-bound state, owing to GTPase activity of alpha-tubulin. This is Tubulin alpha chain (TUB1) from Encephalitozoon hellem (Microsporidian parasite).